A 185-amino-acid polypeptide reads, in one-letter code: MYKSVITEMKAHMEKSVEDLRKEYQRIRTGRASTSLLDEVKVDYYGNPSSLSQVATLAVPEPRTITITPWESKMIGPIEKAILNANLGLTPGNDGKLIRLNLPPLTEERRKEIVKGMKKMDEDHKVAVRNIRRKAIDDLKKMEKDKSITEDELKKAEKEVQTVTDSIIAKLDEILAHKEKEVMEV.

This sequence belongs to the RRF family.

Its subcellular location is the cytoplasm. In terms of biological role, responsible for the release of ribosomes from messenger RNA at the termination of protein biosynthesis. May increase the efficiency of translation by recycling ribosomes from one round of translation to another. This chain is Ribosome-recycling factor, found in Trichlorobacter lovleyi (strain ATCC BAA-1151 / DSM 17278 / SZ) (Geobacter lovleyi).